The chain runs to 47 residues: MAFEEAMNRVFHKKICLRCTARNPWKATKCRKCGYTKLRPKAKESRG.

The protein belongs to the eukaryotic ribosomal protein eL40 family.

The polypeptide is Large ribosomal subunit protein eL40 (Methanococcus aeolicus (strain ATCC BAA-1280 / DSM 17508 / OCM 812 / Nankai-3)).